Consider the following 89-residue polypeptide: Small ribosomal subunit protein uS14A (89 aa).

It belongs to the universal ribosomal protein uS14 family. Part of the 30S ribosomal subunit. Contacts proteins S3 and S10.

Binds 16S rRNA, required for the assembly of 30S particles and may also be responsible for determining the conformation of the 16S rRNA at the A site. The chain is Small ribosomal subunit protein uS14A from Lactococcus lactis subsp. lactis (strain IL1403) (Streptococcus lactis).